A 274-amino-acid polypeptide reads, in one-letter code: MEALRQRIEAAFEARADITPSTVDASVRDDVQNVINMLDKGEVRVAEKIDGQWHVHQWLKKAVLLSFRIFDNVVIDGAETKYFDKVPLKFAEYDEARFKAEAIRVVPSATVRKGSFIGKNTVLMPSYVNLGAYVDEGTMVDTWATVGSCAQIGKNVHLSGGVGIGGVLEPLQAGPTIIEDNCFIGARSEIVEGVVVEEGSVISMGVYIGQSTRIYDRETGEVHYGRVPAGSVVVSGNLPSACGKYSLYAAIIVKKVDAKTRGKVGINELLRIVD.

Residues Arg104 and Asp141 each coordinate substrate.

The protein belongs to the transferase hexapeptide repeat family. In terms of assembly, homotrimer.

It localises to the cytoplasm. The enzyme catalyses (S)-2,3,4,5-tetrahydrodipicolinate + succinyl-CoA + H2O = (S)-2-succinylamino-6-oxoheptanedioate + CoA. Its pathway is amino-acid biosynthesis; L-lysine biosynthesis via DAP pathway; LL-2,6-diaminopimelate from (S)-tetrahydrodipicolinate (succinylase route): step 1/3. In Shewanella baltica (strain OS155 / ATCC BAA-1091), this protein is 2,3,4,5-tetrahydropyridine-2,6-dicarboxylate N-succinyltransferase.